The following is a 237-amino-acid chain: Protein GrpE (237 aa).

Disordered regions lie at residues 24-56 and 204-237; these read LILE…KQLQ and SAGS…PQPS.

This sequence belongs to the GrpE family. In terms of assembly, homodimer.

It localises to the cytoplasm. Participates actively in the response to hyperosmotic and heat shock by preventing the aggregation of stress-denatured proteins, in association with DnaK and GrpE. It is the nucleotide exchange factor for DnaK and may function as a thermosensor. Unfolded proteins bind initially to DnaJ; upon interaction with the DnaJ-bound protein, DnaK hydrolyzes its bound ATP, resulting in the formation of a stable complex. GrpE releases ADP from DnaK; ATP binding to DnaK triggers the release of the substrate protein, thus completing the reaction cycle. Several rounds of ATP-dependent interactions between DnaJ, DnaK and GrpE are required for fully efficient folding. The protein is Protein GrpE of Synechococcus sp. (strain JA-2-3B'a(2-13)) (Cyanobacteria bacterium Yellowstone B-Prime).